The following is a 309-amino-acid chain: MEKILIFGHQNPDTDTICSAIAYADLKNKLGFNAEPVRLGQVNGETQYALDYFKQESPRLVETAANEVNGVILVDHNERQQSIKDIEDVQVLEVIDHHRIANFETAEPLYYRAEPVGCTATILNKMYKENNVKIEKEIAGLMLSAIISDSLLFKSPTCTEQDIAAAKELAEIAGVDAEEYGLNMLKAGADLSKKTVEELISLDAKEFTLGSKKVEIAQVNTVDIEDVKKRQPELEAALSKVIAEKNLDLFLLVITDILENDSLALAIGDQASKVEKAFNVTLENNTALLKGVVSRKKQVVPVLTDAIAE.

Mn(2+) contacts are provided by His-9, Asp-13, Asp-15, Asp-75, His-97, and Asp-149.

This sequence belongs to the PPase class C family. It depends on Mn(2+) as a cofactor.

It is found in the cytoplasm. The enzyme catalyses diphosphate + H2O = 2 phosphate + H(+). The chain is Probable manganese-dependent inorganic pyrophosphatase from Bacillus velezensis (strain DSM 23117 / BGSC 10A6 / LMG 26770 / FZB42) (Bacillus amyloliquefaciens subsp. plantarum).